The chain runs to 354 residues: Probable L-ascorbate-6-phosphate lactonase UlaG (354 aa).

The protein belongs to the UlaG family. It depends on a divalent metal cation as a cofactor.

The protein localises to the cytoplasm. The enzyme catalyses L-ascorbate 6-phosphate + H2O = 3-dehydro-L-gulonate 6-phosphate. The protein operates within cofactor degradation; L-ascorbate degradation; D-xylulose 5-phosphate from L-ascorbate: step 1/4. Functionally, probably catalyzes the hydrolysis of L-ascorbate-6-P into 3-keto-L-gulonate-6-P. Is essential for L-ascorbate utilization under anaerobic conditions. The polypeptide is Probable L-ascorbate-6-phosphate lactonase UlaG (Salmonella heidelberg (strain SL476)).